A 1080-amino-acid chain; its full sequence is Protein transport protein SEC24 C (1080 aa).

Positions 1-10 (MVAPVPPGAP) are enriched in pro residues. 3 disordered regions span residues 1–189 (MVAP…SGMI), 201–220 (GSGG…TTPQ), and 316–367 (TAMG…SDYV). Polar residues predominate over residues 12–43 (PNSQQNSGPPNFYPGSQGNSNALADNMQNLSL). Over residues 45 to 70 (RPPPMMPGSGPRPPPPFGQSPQPFPQ) the composition is skewed to pro residues. 3 stretches are compositionally biased toward low complexity: residues 71–84 (QSPS…GPSP), 142–160 (PAAS…SVAA), and 178–189 (GSGMSMPPSGMI). Residues 340 to 356 (GSSSSPTVFETRQSNQA) are compositionally biased toward polar residues. Zn(2+) contacts are provided by Cys430, Cys433, Cys452, and Cys455. The tract at residues 430–455 (CSRCKGYINPFMKFIDQGRKFICNFC) is zinc finger-like.

Belongs to the SEC23/SEC24 family. SEC24 subfamily. Component of the coat protein complex II (COPII), composed of at least five proteins: the Sec23/24 complex, the Sec13/31 complex and Sar1. In terms of tissue distribution, mainly expressed at low levels in pollen, leaves, roots and stems.

It localises to the cytoplasmic vesicle. The protein resides in the COPII-coated vesicle membrane. Its subcellular location is the endoplasmic reticulum membrane. It is found in the golgi apparatus membrane. Functionally, component of the coat protein complex II (COPII), that covers ER-derived vesicles involved in transport from the endoplasmic reticulum to the Golgi apparatus. COPII is composed of at least five proteins: the SEC23/24 complex, the SEC13/31 complex, and the protein SAR1. Acts in the cytoplasm to promote the transport of secretory, plasma membrane, and vacuolar proteins from the endoplasmic reticulum to the Golgi complex. In Arabidopsis thaliana (Mouse-ear cress), this protein is Protein transport protein SEC24 C.